The following is a 228-amino-acid chain: Aquaporin Z (228 aa).

5 helical membrane-spanning segments follow: residues 1–21 (MLNK…GGCG), 46–66 (TVLT…NPAV), 82–102 (IPYW…LYVI), 129–149 (MMAG…IILG), and 154–174 (LAPA…IHLV). The short motif at 63–65 (NPA) is the NPA 1 element. The NPA 2 signature appears at 184-186 (NPA). The chain crosses the membrane as a helical span at residues 205 to 225 (LFWVAPLVGAVIGAIIWKGLL).

The protein belongs to the MIP/aquaporin (TC 1.A.8) family. Homotetramer.

The protein localises to the cell inner membrane. It catalyses the reaction H2O(in) = H2O(out). Channel that permits osmotically driven movement of water in both directions. It is involved in the osmoregulation and in the maintenance of cell turgor during volume expansion in rapidly growing cells. It mediates rapid entry or exit of water in response to abrupt changes in osmolarity. The polypeptide is Aquaporin Z (Brucella suis biovar 1 (strain 1330)).